A 360-amino-acid chain; its full sequence is 3-isopropylmalate dehydrogenase (360 aa).

Gly76–Glu89 is a binding site for NAD(+). Positions 96, 106, 134, and 224 each coordinate substrate. Residues Asp224, Asp248, and Asp252 each coordinate Mg(2+). Residue Gly282 to Asn294 participates in NAD(+) binding.

This sequence belongs to the isocitrate and isopropylmalate dehydrogenases family. LeuB type 1 subfamily. Homodimer. Mg(2+) is required as a cofactor. The cofactor is Mn(2+).

It is found in the cytoplasm. The enzyme catalyses (2R,3S)-3-isopropylmalate + NAD(+) = 4-methyl-2-oxopentanoate + CO2 + NADH. It functions in the pathway amino-acid biosynthesis; L-leucine biosynthesis; L-leucine from 3-methyl-2-oxobutanoate: step 3/4. Its function is as follows. Catalyzes the oxidation of 3-carboxy-2-hydroxy-4-methylpentanoate (3-isopropylmalate) to 3-carboxy-4-methyl-2-oxopentanoate. The product decarboxylates to 4-methyl-2 oxopentanoate. The polypeptide is 3-isopropylmalate dehydrogenase (Pseudomonas syringae pv. syringae (strain B728a)).